A 344-amino-acid polypeptide reads, in one-letter code: Holliday junction branch migration complex subunit RuvB (344 aa).

The interval 1 to 185 is large ATPase domain (RuvB-L); that stretch reads MTERSDRDVS…FGFTAHMDFY (185 aa). ATP contacts are provided by residues Leu-24, Arg-25, Gly-66, Lys-69, Thr-70, Ser-71, 132 to 134, Arg-175, Tyr-185, and Arg-222; that span reads EDF. Thr-70 is a Mg(2+) binding site. The tract at residues 186–256 is small ATPAse domain (RuvB-S); the sequence is EPAELERVLA…VAKAALEVYD (71 aa). The segment at 259 to 344 is head domain (RuvB-H); it reads ELGLDRLDRA…VGASQPGLFE (86 aa). Residues Arg-314 and Arg-319 each contribute to the DNA site.

Belongs to the RuvB family. Homohexamer. Forms an RuvA(8)-RuvB(12)-Holliday junction (HJ) complex. HJ DNA is sandwiched between 2 RuvA tetramers; dsDNA enters through RuvA and exits via RuvB. An RuvB hexamer assembles on each DNA strand where it exits the tetramer. Each RuvB hexamer is contacted by two RuvA subunits (via domain III) on 2 adjacent RuvB subunits; this complex drives branch migration. In the full resolvosome a probable DNA-RuvA(4)-RuvB(12)-RuvC(2) complex forms which resolves the HJ.

Its subcellular location is the cytoplasm. The catalysed reaction is ATP + H2O = ADP + phosphate + H(+). The RuvA-RuvB-RuvC complex processes Holliday junction (HJ) DNA during genetic recombination and DNA repair, while the RuvA-RuvB complex plays an important role in the rescue of blocked DNA replication forks via replication fork reversal (RFR). RuvA specifically binds to HJ cruciform DNA, conferring on it an open structure. The RuvB hexamer acts as an ATP-dependent pump, pulling dsDNA into and through the RuvAB complex. RuvB forms 2 homohexamers on either side of HJ DNA bound by 1 or 2 RuvA tetramers; 4 subunits per hexamer contact DNA at a time. Coordinated motions by a converter formed by DNA-disengaged RuvB subunits stimulates ATP hydrolysis and nucleotide exchange. Immobilization of the converter enables RuvB to convert the ATP-contained energy into a lever motion, pulling 2 nucleotides of DNA out of the RuvA tetramer per ATP hydrolyzed, thus driving DNA branch migration. The RuvB motors rotate together with the DNA substrate, which together with the progressing nucleotide cycle form the mechanistic basis for DNA recombination by continuous HJ branch migration. Branch migration allows RuvC to scan DNA until it finds its consensus sequence, where it cleaves and resolves cruciform DNA. The protein is Holliday junction branch migration complex subunit RuvB of Mycobacterium tuberculosis (strain ATCC 25177 / H37Ra).